A 317-amino-acid polypeptide reads, in one-letter code: MQFYLDFEKPLVELEQKLSELRDYSTDEVDFSGEIQRLEKKAEKLRREIFSNLNRWQVTQLARHVNRPFTLDFVEHVFTDWFEVHGDRNFRDDPALVCGFARLDGQPCAVIGHQKGRDTKEKVYRNFGMPNPEGYRKALRVMQMAEQFGLPIFTFVDTPGAFPGIGAEERGQAEAIARNLREMAALKVPVIVTVTGEGGSGGALAVAVGNRVLMMENAVYSVISPEGCAAILWKDGAKGPVAAEALKLTAGDIQNLGCVIDEVIPEPLGGAHSDHKAAAEQVRICLKKHLDDLKDLSSDELREQRYQKLRAMTMVQE.

Positions 37-292 constitute a CoA carboxyltransferase C-terminal domain; that stretch reads RLEKKAEKLR…RICLKKHLDD (256 aa).

Belongs to the AccA family. In terms of assembly, acetyl-CoA carboxylase is a heterohexamer composed of biotin carboxyl carrier protein (AccB), biotin carboxylase (AccC) and two subunits each of ACCase subunit alpha (AccA) and ACCase subunit beta (AccD).

It is found in the cytoplasm. It catalyses the reaction N(6)-carboxybiotinyl-L-lysyl-[protein] + acetyl-CoA = N(6)-biotinyl-L-lysyl-[protein] + malonyl-CoA. It functions in the pathway lipid metabolism; malonyl-CoA biosynthesis; malonyl-CoA from acetyl-CoA: step 1/1. Its function is as follows. Component of the acetyl coenzyme A carboxylase (ACC) complex. First, biotin carboxylase catalyzes the carboxylation of biotin on its carrier protein (BCCP) and then the CO(2) group is transferred by the carboxyltransferase to acetyl-CoA to form malonyl-CoA. This Syntrophotalea carbinolica (strain DSM 2380 / NBRC 103641 / GraBd1) (Pelobacter carbinolicus) protein is Acetyl-coenzyme A carboxylase carboxyl transferase subunit alpha.